Here is a 365-residue protein sequence, read N- to C-terminus: HVDHGKTTLTAAITTVLAKKYGGSARAFDQIDNAPEEKARGITINTSHVEYDTSMRHYAHVDCPGHADYIKNMITGAAQMDGAILVVAATDGPMPQTREHILLGRQVGVPYIVVFLNKCDMVDDEELLELVEMEVRDLLTQYDFPGEKTPIIRGSALKALEGDAVWEEKIVDLANTLDSYIPTPERSIDQPFLLPIEDVFSISGRGTVVTGRVERGVIKVGEEVEIVGIKVTSKTICTGVEMFRKLLDEGRAGENVGVLLRGTKRDDIERGQVLAKPGTITPHIKFESEVYVLSKEEGGRHTPFFKGYRPQFYFRTTDVTGYVELPEGVEMVMPGDNIKMVVTLIHPIAMSDGLRFAIREGGRTV.

Residues 1 to 7, 62 to 66, and 117 to 120 contribute to the GTP site; these read HVDHGKT, DCPGH, and NKCD. A tr-type G domain is found at 1-185; sequence HVDHGKTTLT…TLDSYIPTPE (185 aa). Mg(2+) is bound at residue Thr7.

The protein belongs to the TRAFAC class translation factor GTPase superfamily. Classic translation factor GTPase family. EF-Tu/EF-1A subfamily. Monomer.

It localises to the cytoplasm. The enzyme catalyses GTP + H2O = GDP + phosphate + H(+). Functionally, GTP hydrolase that promotes the GTP-dependent binding of aminoacyl-tRNA to the A-site of ribosomes during protein biosynthesis. The polypeptide is Elongation factor Tu (Buchnera aphidicola subsp. Schlechtendalia chinensis).